The primary structure comprises 328 residues: Tetraacyldisaccharide 4'-kinase (328 aa).

ATP is bound at residue 55 to 62 (TAGGNGKT).

The protein belongs to the LpxK family.

It carries out the reaction a lipid A disaccharide + ATP = a lipid IVA + ADP + H(+). The protein operates within glycolipid biosynthesis; lipid IV(A) biosynthesis; lipid IV(A) from (3R)-3-hydroxytetradecanoyl-[acyl-carrier-protein] and UDP-N-acetyl-alpha-D-glucosamine: step 6/6. Its function is as follows. Transfers the gamma-phosphate of ATP to the 4'-position of a tetraacyldisaccharide 1-phosphate intermediate (termed DS-1-P) to form tetraacyldisaccharide 1,4'-bis-phosphate (lipid IVA). This is Tetraacyldisaccharide 4'-kinase from Escherichia coli O6:K15:H31 (strain 536 / UPEC).